A 265-amino-acid polypeptide reads, in one-letter code: 4-hydroxy-tetrahydrodipicolinate reductase (265 aa).

NAD(+) contacts are provided by residues 7 to 12 (GASGRM) and D33. R34 provides a ligand contact to NADP(+). Residues 96-98 (GTT) and 120-123 (ASNF) each bind NAD(+). H153 serves as the catalytic Proton donor/acceptor. H154 is a (S)-2,3,4,5-tetrahydrodipicolinate binding site. K157 serves as the catalytic Proton donor. 163 to 164 (GT) contributes to the (S)-2,3,4,5-tetrahydrodipicolinate binding site.

The protein belongs to the DapB family.

Its subcellular location is the cytoplasm. It catalyses the reaction (S)-2,3,4,5-tetrahydrodipicolinate + NAD(+) + H2O = (2S,4S)-4-hydroxy-2,3,4,5-tetrahydrodipicolinate + NADH + H(+). It carries out the reaction (S)-2,3,4,5-tetrahydrodipicolinate + NADP(+) + H2O = (2S,4S)-4-hydroxy-2,3,4,5-tetrahydrodipicolinate + NADPH + H(+). Its pathway is amino-acid biosynthesis; L-lysine biosynthesis via DAP pathway; (S)-tetrahydrodipicolinate from L-aspartate: step 4/4. Its function is as follows. Catalyzes the conversion of 4-hydroxy-tetrahydrodipicolinate (HTPA) to tetrahydrodipicolinate. The polypeptide is 4-hydroxy-tetrahydrodipicolinate reductase (Paraburkholderia phymatum (strain DSM 17167 / CIP 108236 / LMG 21445 / STM815) (Burkholderia phymatum)).